Here is a 156-residue protein sequence, read N- to C-terminus: Small ribosomal subunit protein uS7 (156 aa).

It belongs to the universal ribosomal protein uS7 family. Part of the 30S ribosomal subunit. Contacts proteins S9 and S11.

Its function is as follows. One of the primary rRNA binding proteins, it binds directly to 16S rRNA where it nucleates assembly of the head domain of the 30S subunit. Is located at the subunit interface close to the decoding center, probably blocks exit of the E-site tRNA. The chain is Small ribosomal subunit protein uS7 from Xanthobacter autotrophicus (strain ATCC BAA-1158 / Py2).